A 429-amino-acid polypeptide reads, in one-letter code: Adenylosuccinate synthetase (429 aa).

GTP is bound by residues 12-18 and 40-42; these read GDEGKGK and GHT. D13 serves as the catalytic Proton acceptor. Mg(2+)-binding residues include D13 and G40. IMP is bound by residues 13–16, 38–41, T130, R144, Q225, T240, and R304; these read DEGK and NAGH. The active-site Proton donor is the H41. A substrate-binding site is contributed by 300-306; the sequence is ATTGRPR. GTP-binding positions include R306, 332 to 334, and 414 to 416; these read KLD and SVG.

The protein belongs to the adenylosuccinate synthetase family. Homodimer. The cofactor is Mg(2+).

The protein localises to the cytoplasm. It carries out the reaction IMP + L-aspartate + GTP = N(6)-(1,2-dicarboxyethyl)-AMP + GDP + phosphate + 2 H(+). It participates in purine metabolism; AMP biosynthesis via de novo pathway; AMP from IMP: step 1/2. Plays an important role in the de novo pathway of purine nucleotide biosynthesis. Catalyzes the first committed step in the biosynthesis of AMP from IMP. This Syntrophobacter fumaroxidans (strain DSM 10017 / MPOB) protein is Adenylosuccinate synthetase.